Consider the following 485-residue polypeptide: uncharacterized protein (485 aa).

10 helical membrane passes run 9 to 29, 66 to 86, 98 to 118, 131 to 151, 159 to 179, 194 to 214, 259 to 279, 293 to 313, 322 to 342, and 350 to 370; these read IFIS…LTHQ, PIID…ALAL, YITA…IENL, VAIS…NIII, FLSL…AFII, NTAS…YFIA, NYLI…VIVL, LLVV…MIFL, VLIG…YAFE, and IYFS…YNAI.

It is found in the host membrane. This is an uncharacterized protein from Salmonella typhimurium (Bacteriophage P22).